Reading from the N-terminus, the 138-residue chain is Putative pre-16S rRNA nuclease (138 aa).

Belongs to the YqgF nuclease family.

Its subcellular location is the cytoplasm. Its function is as follows. Could be a nuclease involved in processing of the 5'-end of pre-16S rRNA. The chain is Putative pre-16S rRNA nuclease from Listeria innocua serovar 6a (strain ATCC BAA-680 / CLIP 11262).